An 85-amino-acid chain; its full sequence is Photosystem I reaction center subunit PsaK (85 aa).

A run of 2 helical transmembrane segments spans residues V13–I33 and G59–L79.

This sequence belongs to the PsaG/PsaK family.

It localises to the cellular thylakoid membrane. This chain is Photosystem I reaction center subunit PsaK, found in Synechococcus sp. (strain WH7803).